The following is a 449-amino-acid chain: UDP-N-acetylmuramoylalanine--D-glutamate ligase (449 aa).

118–124 (GTNGKTT) provides a ligand contact to ATP.

This sequence belongs to the MurCDEF family.

It localises to the cytoplasm. It catalyses the reaction UDP-N-acetyl-alpha-D-muramoyl-L-alanine + D-glutamate + ATP = UDP-N-acetyl-alpha-D-muramoyl-L-alanyl-D-glutamate + ADP + phosphate + H(+). Its pathway is cell wall biogenesis; peptidoglycan biosynthesis. Its function is as follows. Cell wall formation. Catalyzes the addition of glutamate to the nucleotide precursor UDP-N-acetylmuramoyl-L-alanine (UMA). The chain is UDP-N-acetylmuramoylalanine--D-glutamate ligase from Staphylococcus saprophyticus subsp. saprophyticus (strain ATCC 15305 / DSM 20229 / NCIMB 8711 / NCTC 7292 / S-41).